The following is a 422-amino-acid chain: Growth arrest-specific protein 7 (422 aa).

A disordered region spans residues 1-117; it reads MATALQKPGM…SPGRKQSKEN (117 aa). A WW domain is found at 22–55; sequence VILPPGWHSYLSPQGRRYYVNTTTNETTWERPSS. Positions 41 to 52 are enriched in polar residues; sequence VNTTTNETTWER. The span at 53–65 shows a compositional bias: low complexity; it reads PSSSPGISASPGP. Ser-62 and Ser-108 each carry phosphoserine. The span at 95-117 shows a compositional bias: polar residues; that stretch reads RKSTGDSQNLGSSSPGRKQSKEN. In terms of domain architecture, F-BAR spans 141 to 402; that stretch reads TEWSYCDYFW…LLRKVDPAKD (262 aa). Positions 254 to 329 form a coiled coil; it reads ENFKKDMKKC…RKSTQAGDDL (76 aa).

The protein localises to the cytoplasm. Functionally, may play a role in promoting maturation and morphological differentiation of cerebellar neurons. This Rattus norvegicus (Rat) protein is Growth arrest-specific protein 7 (Gas7).